The primary structure comprises 336 residues: CMP-sialic acid transporter (336 aa).

Over 1-9 (MAQARENVS) the chain is Cytoplasmic. Residues 10 to 30 (LFFKLYCLAVMTLVAAAYTVA) form a helical membrane-spanning segment. Residues 31 to 45 (LRYTRTTAKELYFST) are Lumenal-facing. The chain crosses the membrane as a helical span at residues 46 to 64 (TAVCVTEVIKLLISVGLLA). Position 55 (Lys55) interacts with CMP-N-acetyl-beta-neuraminate. Residues 65–87 (KETGSLGRFKASLSENVLGSPKE) are Cytoplasmic-facing. A helical transmembrane segment spans residues 88–108 (LMKLSVPSLVYAVQNNMAFLA). 101–102 (QN) provides a ligand contact to CMP-N-acetyl-beta-neuraminate. Topologically, residues 109–114 (LSNLDA) are lumenal. Residues 115-135 (AVYQVTYQLKIPCTALCTVLM) form a helical membrane-spanning segment. CMP-N-acetyl-beta-neuraminate is bound at residue 117–124 (YQVTYQLK). The Cytoplasmic segment spans residues 136–141 (LNRTLS). Residues 142–160 (KLQWVSVFMLCGGVILVQW) form a helical membrane-spanning segment. Residues 161–175 (KPAQATKVVVEQSPL) are Lumenal-facing. Residues 176–196 (LGFGAIAIAVLCSGFAGVYFE) form a helical membrane-spanning segment. Ser188 lines the CMP-N-acetyl-beta-neuraminate pocket. Over 197-209 (KVLKSSDTSLWVR) the chain is Cytoplasmic. Position 210–214 (210–214 (NIQMY)) interacts with CMP-N-acetyl-beta-neuraminate. The chain crosses the membrane as a helical span at residues 210–228 (NIQMYLSGIVVTLVGTYLS). Residues 229-243 (DGAEIKEKGFFYGYT) are Lumenal-facing. Residues 244 to 262 (YYVWFVIFLASVGGLYTSV) traverse the membrane as a helical segment. Over 263–269 (VVKYTDN) the chain is Cytoplasmic. Residues 270–288 (IMKGFSAAAAIVLSTIASV) traverse the membrane as a helical segment. CMP-N-acetyl-beta-neuraminate is bound at residue Lys272. The Lumenal portion of the chain corresponds to 289–296 (MLFGLQIT). Residues 297-315 (LSFAMGALLVCISIYLYGL) traverse the membrane as a helical segment. The Cytoplasmic portion of the chain corresponds to 316 to 336 (PRQDTTCIQQEATSKERVIGV). The disordered stretch occupies residues 316 to 336 (PRQDTTCIQQEATSKERVIGV).

This sequence belongs to the nucleotide-sugar transporter family. SLC35A subfamily. As to quaternary structure, monomer.

It localises to the golgi apparatus membrane. It catalyses the reaction CMP-N-acetyl-beta-neuraminate(in) + CMP(out) = CMP-N-acetyl-beta-neuraminate(out) + CMP(in). The enzyme catalyses CMP-N-acetyl-beta-neuraminate(in) + AMP(out) = CMP-N-acetyl-beta-neuraminate(out) + AMP(in). The catalysed reaction is CDP-L-ribitol(in) + CDP(out) = CDP-L-ribitol(out) + CDP(in). It carries out the reaction UMP(out) + CMP-N-acetyl-beta-neuraminate(in) = UMP(in) + CMP-N-acetyl-beta-neuraminate(out). Transports CMP-sialic acid from the cytosol into the Golgi apparatus, functioning as an antiporter that exchanges CMP-sialic acid for CMP. Binds both CMP-sialic acid and free CMP, but has higher affinity for free CMP. Also able to exchange CMP-sialic acid for AMP and UMP. Also mediates the transport of CDP-ribitol. The sequence is that of CMP-sialic acid transporter (SLC35A1) from Cricetulus griseus (Chinese hamster).